We begin with the raw amino-acid sequence, 314 residues long: Homoserine O-succinyltransferase (314 aa).

The active-site Acyl-thioester intermediate is cysteine 142. Lysine 163 and serine 192 together coordinate substrate. Histidine 235 functions as the Proton acceptor in the catalytic mechanism. The active site involves glutamate 237. Substrate is bound at residue arginine 249.

The protein belongs to the MetA family.

Its subcellular location is the cytoplasm. It catalyses the reaction L-homoserine + succinyl-CoA = O-succinyl-L-homoserine + CoA. It participates in amino-acid biosynthesis; L-methionine biosynthesis via de novo pathway; O-succinyl-L-homoserine from L-homoserine: step 1/1. Functionally, transfers a succinyl group from succinyl-CoA to L-homoserine, forming succinyl-L-homoserine. The sequence is that of Homoserine O-succinyltransferase from Aeromonas salmonicida (strain A449).